Consider the following 220-residue polypeptide: MRPSKKLLIAIISIFLISSVPVSAHADSTTIQQNKDTLSQIVVFPTGNYDKNEANAMVNRLANIDGKYLNALKQNNLKIKLLSGKLTDEKEYAYLKGVVPKGWEGTGKTWDDVPGLGGSTVALRIGFSNKGKGHDAINLELHETAHAIDHIVLNDISKSAQFKQIFAKEGRSLGNVNYLGVYPEEFFAESFAYYYLNQDTNSKLKSACPQTYSFLQNLAK.

A signal peptide spans 1–26 (MRPSKKLLIAIISIFLISSVPVSAHA). Positions 35–220 (KDTLSQIVVF…TYSFLQNLAK (186 aa)) constitute an ATLF-like domain. 2 interacts with substrate peptide regions span residues 101–103 (KGW) and 117–119 (GGS). Histidine 142 is a binding site for Zn(2+). Catalysis depends on glutamate 143, which acts as the Proton acceptor. Zn(2+) contacts are provided by histidine 146, tyrosine 178, and glutamate 185.

The protein belongs to the peptidase M34 family. Pro-Pro endopeptidase subfamily. As to quaternary structure, monomer. Zn(2+) is required as a cofactor.

It localises to the secreted. The enzyme catalyses The enzyme catalyzes the hydrolytic cleavage of peptide bonds between two proline residues.. With respect to regulation, is inhibited by the chelating agent o-phenanthroline in vitro. In terms of biological role, zinc-dependent endoprotease with a unique preference for proline residues surrounding the scissile bond. Exhibits a high preference for an asparagine at the P2 position and hydrophobic residues (Val, Ile, Leu) at the P3 position. Efficiently cleaves the LPXTG cell surface proteins CD630_28310 and CD630_32460 at multiple cleavage sites in vivo. Has a role in the regulation of C.difficile adhesion versus motility by cleaving surface adhesion proteins such as the collagen binding protein CD630_28310, and is important for efficient infection. Is also able to cleave fibronectin and fibrinogen in vitro; cleaves at the N-terminus of the beta-chain of fibrinogen. Destabilizes the fibronectin network produced by human fibroblasts. Therefore, may be important in key steps of clostridial pathogenesis by degrading extracellular matrix components associated with the gut epithelial cells. To a lesser extent, IgA1, IgA2, and human HSP 90-beta, but not HSP 90-alpha, are also substrates for the enzyme. Is not active on different collagen types, casein and gelatin. In Clostridioides difficile (strain 630) (Peptoclostridium difficile), this protein is Pro-Pro endopeptidase.